The sequence spans 405 residues: Syndecan-3 (405 aa).

An N-terminal signal peptide occupies residues 1–22 (MPAELRRLAVLLLLLSARAALA). Residues 23 to 347 (QPWRNENYER…PQKNILERKE (325 aa)) lie on the Extracellular side of the membrane. The disordered stretch occupies residues 31–59 (ERPVDLEGSGDDDPFGDDELDDIYSGSGS). A compositionally biased stretch (acidic residues) spans 38-52 (GSGDDDPFGDDELDD). O-linked (Xyl...) (glycosaminoglycan) serine glycosylation is found at Ser-39, Ser-55, Ser-57, Ser-59, and Ser-66. Disordered regions lie at residues 134 to 159 (TTTA…ATTT) and 191 to 301 (TRAT…ELGN). Low complexity predominate over residues 191–201 (TRATTLETPTT). Residues 202-237 (SIPETSVLTEVTTSRLVPSSTAKPRSLPKPSTSRTA) are compositionally biased toward polar residues. 3 O-linked (Xyl...) (glycosaminoglycan) serine glycosylation sites follow: Ser-280, Ser-283, and Ser-330. Residues 348 to 372 (VLIAVIVGGVVGALFAAFLVMLLIY) form a helical membrane-spanning segment. Residues 373–405 (RMKKKDEGSYTLEEPKQANVTYQKPDKQEEFYA) lie on the Cytoplasmic side of the membrane.

This sequence belongs to the syndecan proteoglycan family. Post-translationally, O-glycosylated within the Thr/Ser-rich region which could interact with lectin domains on other molecules. In terms of tissue distribution, proximal chondrogenic central core of embryonic limb buds where cartilage differentiation is being initiated.

It localises to the membrane. Its function is as follows. Cell surface proteoglycan that may bear both heparan sulfate and chondroitin sulfate. The multiple functional domains provide potential sites for mediating the adhesive cell-matrix interactions and cytoskeletal reorganization involved in limb chondrogenesis. Interaction with other matrix ligands as well as phosphorylation and shedding of the ectodomain might be involved in cell shape changes that occur during chondrogenesis. Furthermore, shedding of the ectodomain might break the adhesive interactions that promoted condensation, thus facilitating the deposition of cartilage matrix molecules. The sequence is that of Syndecan-3 (SDC3) from Gallus gallus (Chicken).